Here is a 152-residue protein sequence, read N- to C-terminus: Small ribosomal subunit protein uS8m (152 aa).

The protein belongs to the universal ribosomal protein uS8 family.

The protein resides in the mitochondrion. In Marchantia polymorpha (Common liverwort), this protein is Small ribosomal subunit protein uS8m (RPS8).